The following is a 512-amino-acid chain: 2,3-bisphosphoglycerate-independent phosphoglycerate mutase (512 aa).

Residues Asp12 and Ser62 each coordinate Mn(2+). Ser62 functions as the Phosphoserine intermediate in the catalytic mechanism. Residues His123, 153-154 (RD), Arg185, Arg191, 260-263 (RPDR), and Lys333 each bind substrate. The Mn(2+) site is built by Asp400, His404, Asp441, His442, and His460.

The protein belongs to the BPG-independent phosphoglycerate mutase family. In terms of assembly, monomer. Requires Mn(2+) as cofactor.

It catalyses the reaction (2R)-2-phosphoglycerate = (2R)-3-phosphoglycerate. Its pathway is carbohydrate degradation; glycolysis; pyruvate from D-glyceraldehyde 3-phosphate: step 3/5. In terms of biological role, catalyzes the interconversion of 2-phosphoglycerate and 3-phosphoglycerate. In Clostridium perfringens (strain ATCC 13124 / DSM 756 / JCM 1290 / NCIMB 6125 / NCTC 8237 / Type A), this protein is 2,3-bisphosphoglycerate-independent phosphoglycerate mutase.